Here is a 97-residue protein sequence, read N- to C-terminus: MKIEVNENLIKHLENLSLIQLSGEEEKILEKDLANIIKFFEKINELDLSNVEPLFHPLPQGRLRKDVPRDPLDRENALKNVKRKEDGYIVGPRTYGE.

This sequence belongs to the GatC family. As to quaternary structure, heterotrimer of A, B and C subunits.

The enzyme catalyses L-glutamyl-tRNA(Gln) + L-glutamine + ATP + H2O = L-glutaminyl-tRNA(Gln) + L-glutamate + ADP + phosphate + H(+). It catalyses the reaction L-aspartyl-tRNA(Asn) + L-glutamine + ATP + H2O = L-asparaginyl-tRNA(Asn) + L-glutamate + ADP + phosphate + 2 H(+). Allows the formation of correctly charged Asn-tRNA(Asn) or Gln-tRNA(Gln) through the transamidation of misacylated Asp-tRNA(Asn) or Glu-tRNA(Gln) in organisms which lack either or both of asparaginyl-tRNA or glutaminyl-tRNA synthetases. The reaction takes place in the presence of glutamine and ATP through an activated phospho-Asp-tRNA(Asn) or phospho-Glu-tRNA(Gln). The polypeptide is Glutamyl-tRNA(Gln) amidotransferase subunit C (Saccharolobus solfataricus (strain ATCC 35092 / DSM 1617 / JCM 11322 / P2) (Sulfolobus solfataricus)).